Reading from the N-terminus, the 735-residue chain is Photosystem I P700 chlorophyll a apoprotein A2 (735 aa).

8 helical membrane-spanning segments follow: residues 47–70, 136–159, 176–200, 274–292, 331–354, 370–396, 418–440, and 518–536; these read IFAS…FHVA, LYVG…LHLQ, LNHH…HVAI, MAHH…GHMY, LHFQ…QHMY, AALY…IFWI, AIIS…LYVH, and FLVH…LILV. [4Fe-4S] cluster contacts are provided by cysteine 560 and cysteine 569. The next 2 membrane-spanning stretches (helical) occupy residues 576–597 and 644–666; these read AFYL…YWHW and LSVW…MFLI. Positions 655, 663, and 671 each coordinate chlorophyll a. A phylloquinone-binding site is contributed by tryptophan 672. The chain crosses the membrane as a helical span at residues 708 to 728; the sequence is LVGLAHFSVGYVFTYAAFVIA.

The protein belongs to the PsaA/PsaB family. In terms of assembly, the PsaA/B heterodimer binds the P700 chlorophyll special pair and subsequent electron acceptors. PSI consists of a core antenna complex that captures photons, and an electron transfer chain that converts photonic excitation into a charge separation. The eukaryotic PSI reaction center is composed of at least 11 subunits. It depends on P700 is a chlorophyll a/chlorophyll a' dimer, A0 is one or more chlorophyll a, A1 is one or both phylloquinones and FX is a shared 4Fe-4S iron-sulfur center. as a cofactor.

It is found in the plastid. The protein resides in the chloroplast thylakoid membrane. The enzyme catalyses reduced [plastocyanin] + hnu + oxidized [2Fe-2S]-[ferredoxin] = oxidized [plastocyanin] + reduced [2Fe-2S]-[ferredoxin]. In terms of biological role, psaA and PsaB bind P700, the primary electron donor of photosystem I (PSI), as well as the electron acceptors A0, A1 and FX. PSI is a plastocyanin/cytochrome c6-ferredoxin oxidoreductase, converting photonic excitation into a charge separation, which transfers an electron from the donor P700 chlorophyll pair to the spectroscopically characterized acceptors A0, A1, FX, FA and FB in turn. Oxidized P700 is reduced on the lumenal side of the thylakoid membrane by plastocyanin or cytochrome c6. The protein is Photosystem I P700 chlorophyll a apoprotein A2 of Tetradesmus obliquus (Green alga).